Here is a 47-residue protein sequence, read N- to C-terminus: Mu-theraphotoxin-An1a (47 aa).

3 cysteine pairs are disulfide-bonded: C4–C34, C8–C39, and C22–C44.

Post-translationally, contains 3 disulfide bonds. As to expression, expressed by the venom gland.

It localises to the secreted. In terms of biological role, is toxic to insects. Reduces amplitude and frequency of spontaneous firing and inhibits voltage-gated sodium current (Nav) in the dorsal unpaired median (DUM) neurons of P.americana. The protein is Mu-theraphotoxin-An1a of Acanthoscurria natalensis (Tarantula spider).